The sequence spans 419 residues: eIF5-mimic protein 1 (419 aa).

The disordered stretch occupies residues 1–22 (MNKHQKPVLTGQRFKTRKRDEK). Lys-117 is subject to N6-acetyllysine. The W2 domain maps to 248-415 (VQQSLGTRKE…QNAEEESESE (168 aa)). Phosphoserine occurs at positions 412 and 414.

The protein belongs to the BZW family. In terms of assembly, interacts with EIF3E, EIF2S2 and EIF3C.

The protein localises to the cytoplasm. Translation initiation regulator which represses non-AUG initiated translation and repeat-associated non-AUG (RAN) initiated translation by acting as a competitive inhibitor of eukaryotic translation initiation factor 5 (EIF5) function. Increases the accuracy of translation initiation by impeding EIF5-dependent translation from non-AUG codons by competing with it for interaction with EIF2S2 within the 43S pre-initiation complex (PIC) in an EIF3C-binding dependent manner. This Macaca fascicularis (Crab-eating macaque) protein is eIF5-mimic protein 1 (BZW2).